Consider the following 602-residue polypeptide: NADH-quinone oxidoreductase subunit C/D (602 aa).

The NADH dehydrogenase I subunit C stretch occupies residues M1–Q192. Residues D216–R602 form an NADH dehydrogenase I subunit D region.

In the N-terminal section; belongs to the complex I 30 kDa subunit family. This sequence in the C-terminal section; belongs to the complex I 49 kDa subunit family. In terms of assembly, NDH-1 is composed of 13 different subunits. Subunits NuoB, CD, E, F, and G constitute the peripheral sector of the complex.

Its subcellular location is the cell inner membrane. It carries out the reaction a quinone + NADH + 5 H(+)(in) = a quinol + NAD(+) + 4 H(+)(out). Functionally, NDH-1 shuttles electrons from NADH, via FMN and iron-sulfur (Fe-S) centers, to quinones in the respiratory chain. The immediate electron acceptor for the enzyme in this species is believed to be ubiquinone. Couples the redox reaction to proton translocation (for every two electrons transferred, four hydrogen ions are translocated across the cytoplasmic membrane), and thus conserves the redox energy in a proton gradient. The sequence is that of NADH-quinone oxidoreductase subunit C/D from Klebsiella pneumoniae (strain 342).